Consider the following 587-residue polypeptide: Pyruvate kinase (587 aa).

Arg33 is a binding site for substrate. K(+) is bound by residues Asn35, Ser37, Asp67, and Thr68. 35–38 (NFSH) is a binding site for ATP. Arg74 and Lys157 together coordinate ATP. Lys221 lines the substrate pocket. Glu223 is a binding site for Mg(2+). Residues Gly246, Asp247, and Thr279 each contribute to the substrate site. Asp247 provides a ligand contact to Mg(2+).

The protein belongs to the pyruvate kinase family. It in the C-terminal section; belongs to the PEP-utilizing enzyme family. In terms of assembly, homotetramer. Mg(2+) serves as cofactor. The cofactor is K(+). The N-terminus is blocked.

It catalyses the reaction pyruvate + ATP = phosphoenolpyruvate + ADP + H(+). It participates in carbohydrate degradation; glycolysis; pyruvate from D-glyceraldehyde 3-phosphate: step 5/5. Its activity is regulated as follows. Exhibits homotropic positive cooperativity for PEP. Allosterically activated by ribose-5-phosphate, AMP and other nucleoside monophosphates but not by fructose-1,6-bisphosphate. Catalyzes the phosphoryl transfer from phosphoenolpyruvate (PEP) to ADP to form pyruvate and ATP. Has a broad specificity for nucleoside diphosphates and can use ADP, GDP, IDP and UDP. The polypeptide is Pyruvate kinase (pyk) (Geobacillus stearothermophilus (Bacillus stearothermophilus)).